The following is a 353-amino-acid chain: Quinolinate synthase (353 aa).

Positions 49 and 70 each coordinate iminosuccinate. C115 is a binding site for [4Fe-4S] cluster. Iminosuccinate contacts are provided by residues 141-143 (YAN) and S158. C202 contacts [4Fe-4S] cluster. Iminosuccinate is bound by residues 228–230 (HPE) and T245. [4Fe-4S] cluster is bound at residue C299.

Belongs to the quinolinate synthase family. Type 1 subfamily. It depends on [4Fe-4S] cluster as a cofactor.

The protein resides in the cytoplasm. The enzyme catalyses iminosuccinate + dihydroxyacetone phosphate = quinolinate + phosphate + 2 H2O + H(+). The protein operates within cofactor biosynthesis; NAD(+) biosynthesis; quinolinate from iminoaspartate: step 1/1. Functionally, catalyzes the condensation of iminoaspartate with dihydroxyacetone phosphate to form quinolinate. In Marinobacter nauticus (strain ATCC 700491 / DSM 11845 / VT8) (Marinobacter aquaeolei), this protein is Quinolinate synthase.